The primary structure comprises 695 residues: Nucleoprotein (695 aa).

Coiled coils occupy residues 316–341 and 372–399; these read VNVG…RRHE and QTLA…VEDQ. 3 disordered regions span residues 423–458, 483–515, and 527–612; these read VQAR…SFVD, TSRE…TNPI, and PVQE…DTRA. Composition is skewed to polar residues over residues 495–505 and 537–552; these read RQSQDLNNSQG and TTDS…SDNE. Positions 603–606 match the PTAP/PSAP motif motif; the sequence is PSAP.

The protein belongs to the filoviruses nucleoprotein family. In terms of assembly, homooligomer. Homomultimerizes to form the nucleocapsid. Binds to viral genomic RNA. Interacts with VP35 and VP30 to form the nucleocapsid. Also interacts with VP24 and VP40. Phosphorylated.

The protein resides in the virion. It localises to the host cytoplasm. Its function is as follows. Encapsidates the genome, protecting it from nucleases. The encapsidated genomic RNA is termed the nucleocapsid and serves as template for transcription and replication. During replication, encapsidation by NP is coupled to RNA synthesis and all replicative products are resistant to nucleases. This Chlorocebus aethiops (Green monkey) protein is Nucleoprotein (NP).